The primary structure comprises 377 residues: Queuine tRNA-ribosyltransferase (377 aa).

D89 serves as the catalytic Proton acceptor. Residues 89–93, D143, Q188, and G215 contribute to the substrate site; that span reads DSGGF. The tract at residues 246–252 is RNA binding; that stretch reads GVGKPED. The Nucleophile role is filled by D265. The interval 270 to 274 is RNA binding; important for wobble base 34 recognition; it reads TRNAR. Positions 303, 305, 308, and 334 each coordinate Zn(2+).

Belongs to the queuine tRNA-ribosyltransferase family. Homodimer. Within each dimer, one monomer is responsible for RNA recognition and catalysis, while the other monomer binds to the replacement base PreQ1. Zn(2+) is required as a cofactor.

It carries out the reaction 7-aminomethyl-7-carbaguanine + guanosine(34) in tRNA = 7-aminomethyl-7-carbaguanosine(34) in tRNA + guanine. Its pathway is tRNA modification; tRNA-queuosine biosynthesis. Its function is as follows. Catalyzes the base-exchange of a guanine (G) residue with the queuine precursor 7-aminomethyl-7-deazaguanine (PreQ1) at position 34 (anticodon wobble position) in tRNAs with GU(N) anticodons (tRNA-Asp, -Asn, -His and -Tyr). Catalysis occurs through a double-displacement mechanism. The nucleophile active site attacks the C1' of nucleotide 34 to detach the guanine base from the RNA, forming a covalent enzyme-RNA intermediate. The proton acceptor active site deprotonates the incoming PreQ1, allowing a nucleophilic attack on the C1' of the ribose to form the product. After dissociation, two additional enzymatic reactions on the tRNA convert PreQ1 to queuine (Q), resulting in the hypermodified nucleoside queuosine (7-(((4,5-cis-dihydroxy-2-cyclopenten-1-yl)amino)methyl)-7-deazaguanosine). The polypeptide is Queuine tRNA-ribosyltransferase (Acinetobacter baumannii (strain ACICU)).